The primary structure comprises 354 residues: Divinyl chlorophyll a/b light-harvesting protein PcbF (354 aa).

6 helical membrane-spanning segments follow: residues Phe-27 to Leu-47, Val-88 to Leu-108, Phe-140 to Ala-160, Val-201 to Ile-221, Ala-248 to Cys-268, and Thr-315 to Leu-335.

It belongs to the PsbB/PsbC family. IsiA/Pcb subfamily. In terms of assembly, the antenna complex consists of divinyl chlorophylls (a and b) and divinyl chlorophyll a/b binding proteins and binds more divinyl chlorophyll b than does the antenna complex from high-light-adapted Prochlorococcus. The cofactor is divinyl chlorophyll a. Divinyl chlorophyll b serves as cofactor.

Its subcellular location is the cellular thylakoid membrane. The antenna complex functions as a light receptor, it captures and delivers excitation energy to photosystems II and I. The Prochlorales pcb genes are not related to higher plant LHCs. The polypeptide is Divinyl chlorophyll a/b light-harvesting protein PcbF (pcbF) (Prochlorococcus marinus (strain SARG / CCMP1375 / SS120)).